A 371-amino-acid chain; its full sequence is Mitogen-activated protein kinase homolog MMK2 (371 aa).

The region spanning 37 to 323 (VPPIRSVGRG…VDEALCHPYM (287 aa)) is the Protein kinase domain. Residues 43 to 51 (VGRGAYGIV) and K66 each bind ATP. D163 acts as the Proton acceptor in catalysis. T195 is subject to Phosphothreonine. A TXY motif is present at residues 195-197 (TEY). The residue at position 197 (Y197) is a Phosphotyrosine.

This sequence belongs to the protein kinase superfamily. CMGC Ser/Thr protein kinase family. MAP kinase subfamily. The cofactor is Mg(2+). In terms of processing, dually phosphorylated on Thr-195 and Tyr-197, which activates the enzyme. Autophosphorylated.

The enzyme catalyses L-seryl-[protein] + ATP = O-phospho-L-seryl-[protein] + ADP + H(+). It catalyses the reaction L-threonyl-[protein] + ATP = O-phospho-L-threonyl-[protein] + ADP + H(+). Its activity is regulated as follows. Activated by tyrosine and threonine phosphorylation. This Medicago sativa (Alfalfa) protein is Mitogen-activated protein kinase homolog MMK2 (MMK2).